The chain runs to 328 residues: DNA-directed RNA polymerase subunit alpha 1 (328 aa).

The interval 1 to 234 is alpha N-terminal domain (alpha-NTD); the sequence is MQGFVKDFLK…GQLDEFVDER (234 aa). The segment at 248 to 328 is alpha C-terminal domain (alpha-CTD); it reads FDPILLRPVN…NWPPASLIED (81 aa).

This sequence belongs to the RNA polymerase alpha chain family. As to quaternary structure, homodimer. The RNAP catalytic core consists of 2 alpha, 1 beta, 1 beta' and 1 omega subunit. When a sigma factor is associated with the core the holoenzyme is formed, which can initiate transcription.

The enzyme catalyses RNA(n) + a ribonucleoside 5'-triphosphate = RNA(n+1) + diphosphate. DNA-dependent RNA polymerase catalyzes the transcription of DNA into RNA using the four ribonucleoside triphosphates as substrates. The polypeptide is DNA-directed RNA polymerase subunit alpha 1 (Psychromonas ingrahamii (strain DSM 17664 / CCUG 51855 / 37)).